The following is a 123-amino-acid chain: Fluoride-specific ion channel FluC 1 (123 aa).

Helical transmembrane passes span 1–21, 34–54, 59–79, and 99–119; these read MVDL…RYTL, PLAT…LYGF, VIWL…STYI, and LTSI…ANFF. Residues glycine 70 and threonine 73 each coordinate Na(+).

It belongs to the fluoride channel Fluc/FEX (TC 1.A.43) family.

The protein localises to the cell membrane. It carries out the reaction fluoride(in) = fluoride(out). Na(+) is not transported, but it plays an essential structural role and its presence is essential for fluoride channel function. Its function is as follows. Fluoride-specific ion channel. Important for reducing fluoride concentration in the cell, thus reducing its toxicity. This is Fluoride-specific ion channel FluC 1 from Carboxydothermus hydrogenoformans (strain ATCC BAA-161 / DSM 6008 / Z-2901).